The primary structure comprises 69 residues: uncharacterized protein (69 aa).

Positions Leu21–Lys64 form a coiled coil.

This is an uncharacterized protein from Saccharomyces cerevisiae (strain ATCC 204508 / S288c) (Baker's yeast).